We begin with the raw amino-acid sequence, 389 residues long: Chalcone synthase (389 aa).

The active site involves cysteine 164.

This sequence belongs to the thiolase-like superfamily. Chalcone/stilbene synthases family.

The catalysed reaction is (E)-4-coumaroyl-CoA + 3 malonyl-CoA + 3 H(+) = 2',4,4',6'-tetrahydroxychalcone + 3 CO2 + 4 CoA. It participates in secondary metabolite biosynthesis; flavonoid biosynthesis. In terms of biological role, the primary product of this enzyme is 4,2',4',6'-tetrahydroxychalcone (also termed naringenin-chalcone or chalcone) which can under specific conditions spontaneously isomerize into naringenin. The sequence is that of Chalcone synthase (CHS) from Catharanthus roseus (Madagascar periwinkle).